Reading from the N-terminus, the 452-residue chain is Translation initiation factor eIF2B subunit gamma (452 aa).

The residue at position 1 (M1) is an N-acetylmethionine. A Phosphoserine modification is found at S260.

This sequence belongs to the eIF-2B gamma/epsilon subunits family. In terms of assembly, component of the translation initiation factor 2B (eIF2B) complex which is a heterodecamer of two sets of five different subunits: alpha, beta, gamma, delta and epsilon. Subunits alpha, beta and delta comprise a regulatory subcomplex and subunits epsilon and gamma comprise a catalytic subcomplex. Within the complex, the hexameric regulatory complex resides at the center, with the two heterodimeric catalytic subcomplexes bound on opposite sides.

The protein resides in the cytoplasm. It localises to the cytosol. With respect to regulation, activated by the chemical integrated stress response (ISR) inhibitor ISRIB which stimulates guanine nucleotide exchange factor activity for both phosphorylated and unphosphorylated eIF2. In terms of biological role, acts as a component of the translation initiation factor 2B (eIF2B) complex, which catalyzes the exchange of GDP for GTP on the eukaryotic initiation factor 2 (eIF2) complex gamma subunit. Its guanine nucleotide exchange factor activity is repressed when bound to eIF2 complex phosphorylated on the alpha subunit, thereby limiting the amount of methionyl-initiator methionine tRNA available to the ribosome and consequently global translation is repressed. In Homo sapiens (Human), this protein is Translation initiation factor eIF2B subunit gamma (EIF2B3).